The sequence spans 286 residues: Hydroxysteroid 11-beta-dehydrogenase 1-like protein (286 aa).

An N-terminal signal peptide occupies residues 1–17; sequence MGIHIKRWCFIILVASA. NADP(+) is bound by residues 39–65, 90–91, and 117–119; these read GASTGIGEEIAYHYARAGAKLVLTARR, DM, and NHI. Ser168 provides a ligand contact to substrate. The Proton acceptor role is filled by Tyr181. Residues 181-185 and 214-220 contribute to the NADP(+) site; these read YAASK and GLIDTQS.

Belongs to the short-chain dehydrogenases/reductases (SDR) family.

The protein localises to the secreted. The enzyme catalyses cortisone + NADPH + H(+) = cortisol + NADP(+). Its function is as follows. Unidirectional NADP(+)-dependent cortisol dehydrogenase (in vitro). The chain is Hydroxysteroid 11-beta-dehydrogenase 1-like protein (hsd11b1l) from Xenopus tropicalis (Western clawed frog).